Reading from the N-terminus, the 387-residue chain is 1-deoxy-D-xylulose 5-phosphate reductoisomerase (387 aa).

Residues Thr10, Gly11, Ser12, Ile13, Gly36, Asn38, and Asn122 each coordinate NADPH. Lys123 provides a ligand contact to 1-deoxy-D-xylulose 5-phosphate. Position 124 (Glu124) interacts with NADPH. Asp148 contacts Mn(2+). Residues Ser149, Glu150, Ser174, and His197 each coordinate 1-deoxy-D-xylulose 5-phosphate. Glu150 is a Mn(2+) binding site. NADPH is bound at residue Gly203. Positions 210, 215, 216, and 219 each coordinate 1-deoxy-D-xylulose 5-phosphate. Glu219 serves as a coordination point for Mn(2+).

It belongs to the DXR family. Mg(2+) is required as a cofactor. The cofactor is Mn(2+).

The enzyme catalyses 2-C-methyl-D-erythritol 4-phosphate + NADP(+) = 1-deoxy-D-xylulose 5-phosphate + NADPH + H(+). It participates in isoprenoid biosynthesis; isopentenyl diphosphate biosynthesis via DXP pathway; isopentenyl diphosphate from 1-deoxy-D-xylulose 5-phosphate: step 1/6. Functionally, catalyzes the NADPH-dependent rearrangement and reduction of 1-deoxy-D-xylulose-5-phosphate (DXP) to 2-C-methyl-D-erythritol 4-phosphate (MEP). The polypeptide is 1-deoxy-D-xylulose 5-phosphate reductoisomerase (Chloroherpeton thalassium (strain ATCC 35110 / GB-78)).